Consider the following 33-residue polypeptide: Potassium channel toxin alpha-KTx 24.1 (33 aa).

4 disulfide bridges follow: C4-C23, C9-C28, C13-C30, and C18-C33.

Belongs to the short scorpion toxin superfamily. Potassium channel inhibitor family. Alpha-KTx 24 subfamily. Contains 4 disulfide bonds. As to expression, expressed by the venom gland.

The protein localises to the secreted. Reversibly blocks voltage-gated potassium channels Kv1.2/KCNA2, Kv1.3/KCNA3 and, weakly, Shaker B. This chain is Potassium channel toxin alpha-KTx 24.1, found in Pandinus imperator (Emperor scorpion).